We begin with the raw amino-acid sequence, 161 residues long: NADH:FMN oxidoreductase (161 aa).

Residues D30, 37–40, 54–61, A88, R94, and F151 contribute to the FMN site; these read AAST and CVQNSSTT.

The protein belongs to the non-flavoprotein flavin reductase family.

The protein resides in the cytoplasm. The catalysed reaction is FMNH2 + NAD(+) = FMN + NADH + 2 H(+). The enzyme catalyses FADH2 + NAD(+) = FAD + NADH + 2 H(+). It functions in the pathway sulfur metabolism; dibenzothiophene degradation. An NADH:FMN oxidoreductase which supplies reduced FMN for the '4S' desulfurization pathway that removes covalently bound sulfur from dibenzothiophene (DBT) without breaking carbon-carbon bonds. Can also use FAD. Provides DszC and probably also DszA (DBT-monooxygenase and DBTO2-monooxygenase respectively) with reduced flavin (FMN and/or FAD). The sequence is that of NADH:FMN oxidoreductase from Mycolicibacterium goodii (Mycobacterium goodii).